A 20-amino-acid chain; its full sequence is KRTKAPFSRVVKFSIDEIRN.

In Naegleria fowleri (Brain eating amoeba), this protein is Unknown protein NF019 from 2D-PAGE.